Here is a 1405-residue protein sequence, read N- to C-terminus: DNA-directed RNA polymerase subunit beta' (1405 aa).

Cys65, Cys67, Cys80, and Cys83 together coordinate Zn(2+). Asp468, Asp470, and Asp472 together coordinate Mg(2+). Zn(2+) contacts are provided by Cys811, Cys885, Cys892, and Cys895.

It belongs to the RNA polymerase beta' chain family. In terms of assembly, the RNAP catalytic core consists of 2 alpha, 1 beta, 1 beta' and 1 omega subunit. When a sigma factor is associated with the core the holoenzyme is formed, which can initiate transcription. Mg(2+) serves as cofactor. Zn(2+) is required as a cofactor.

The enzyme catalyses RNA(n) + a ribonucleoside 5'-triphosphate = RNA(n+1) + diphosphate. Its function is as follows. DNA-dependent RNA polymerase catalyzes the transcription of DNA into RNA using the four ribonucleoside triphosphates as substrates. This is DNA-directed RNA polymerase subunit beta' from Azobacteroides pseudotrichonymphae genomovar. CFP2.